The sequence spans 601 residues: UvrABC system protein C (601 aa).

One can recognise a GIY-YIG domain in the interval 15 to 94 (LQPGVYLFKN…IKSYKPRYNI (80 aa)). A UVR domain is found at 202-237 (QEIVREKEKEMAMAARSLEFEKAARLRDQIQSLRQL).

Belongs to the UvrC family. Interacts with UvrB in an incision complex.

The protein resides in the cytoplasm. In terms of biological role, the UvrABC repair system catalyzes the recognition and processing of DNA lesions. UvrC both incises the 5' and 3' sides of the lesion. The N-terminal half is responsible for the 3' incision and the C-terminal half is responsible for the 5' incision. The protein is UvrABC system protein C of Syntrophomonas wolfei subsp. wolfei (strain DSM 2245B / Goettingen).